Consider the following 507-residue polypeptide: ATP synthase subunit alpha, plastid (507 aa).

170-177 provides a ligand contact to ATP; sequence GDRQTGKT.

Belongs to the ATPase alpha/beta chains family. In terms of assembly, F-type ATPases have 2 components, CF(1) - the catalytic core - and CF(0) - the membrane proton channel. CF(1) has five subunits: alpha(3), beta(3), gamma(1), delta(1), epsilon(1). CF(0) has four main subunits: a, b, b' and c.

Its subcellular location is the plastid membrane. The enzyme catalyses ATP + H2O + 4 H(+)(in) = ADP + phosphate + 5 H(+)(out). In terms of biological role, produces ATP from ADP in the presence of a proton gradient across the membrane. The alpha chain is a regulatory subunit. This Aneura mirabilis (Parasitic liverwort) protein is ATP synthase subunit alpha, plastid.